The primary structure comprises 121 residues: uncharacterized protein (121 aa).

Residues 9 to 77 enclose the HTH gntR-type domain; that stretch reads KPIYLQIADQ…RGQGTFIAEK (69 aa). Residues 37–56 constitute a DNA-binding region (H-T-H motif); sequence VREMAIQTKVNPNTIQRTYS.

This is an uncharacterized protein from Bacillus subtilis (strain 168).